A 179-amino-acid chain; its full sequence is ATP-dependent protease subunit HslV (179 aa).

Residue T7 is part of the active site. Na(+) contacts are provided by G162, C165, and T168.

This sequence belongs to the peptidase T1B family. HslV subfamily. In terms of assembly, a double ring-shaped homohexamer of HslV is capped on each side by a ring-shaped HslU homohexamer. The assembly of the HslU/HslV complex is dependent on binding of ATP.

Its subcellular location is the cytoplasm. It catalyses the reaction ATP-dependent cleavage of peptide bonds with broad specificity.. With respect to regulation, allosterically activated by HslU binding. Functionally, protease subunit of a proteasome-like degradation complex believed to be a general protein degrading machinery. This Bordetella petrii (strain ATCC BAA-461 / DSM 12804 / CCUG 43448) protein is ATP-dependent protease subunit HslV.